The chain runs to 356 residues: HORMA domain-containing protein 1 (356 aa).

The HORMA domain occupies 24-225 (QQSLVLVKKL…TPFHSIKMNV (202 aa)). Disordered stretches follow at residues 282–305 (ETQE…PKMD) and 333–356 (QLEF…SVPK). Over residues 288–298 (EQPHRHTKEDF) the composition is skewed to basic and acidic residues. Basic residues predominate over residues 347 to 356 (PKRRKVSVPK).

It is found in the nucleus. The protein resides in the chromosome. Functionally, plays a key role in meiotic progression by ensuring that sufficient numbers of processed DNA double-strand breaks (DSBs) are available for successful homology search, promoting synaptonemal-complex formation independently and playing key role in the male mid-pachytene checkpoint and the female meiotic prophase checkpoint. The protein is HORMA domain-containing protein 1 (hormad1) of Danio rerio (Zebrafish).